We begin with the raw amino-acid sequence, 145 residues long: 3-dehydroquinate dehydratase (145 aa).

Tyrosine 23 acts as the Proton acceptor in catalysis. Asparagine 75, histidine 81, and aspartate 88 together coordinate substrate. Histidine 101 serves as the catalytic Proton donor. Residues 102–103 (LS) and arginine 112 each bind substrate.

It belongs to the type-II 3-dehydroquinase family. In terms of assembly, homododecamer.

The catalysed reaction is 3-dehydroquinate = 3-dehydroshikimate + H2O. The protein operates within metabolic intermediate biosynthesis; chorismate biosynthesis; chorismate from D-erythrose 4-phosphate and phosphoenolpyruvate: step 3/7. In terms of biological role, catalyzes a trans-dehydration via an enolate intermediate. This Legionella pneumophila (strain Paris) protein is 3-dehydroquinate dehydratase.